The primary structure comprises 101 residues: uncharacterized protein (101 aa).

The signal sequence occupies residues 1 to 27; it reads MQLTGSIYPWFTAYALLKSTLMELINS. 2 helical membrane-spanning segments follow: residues 42–64 and 79–98; these read LVPYWLSIRLSLLYFKLTEAISF and TFVFGYIVNCFFIIHLNTFL.

Its subcellular location is the cytoplasm. It localises to the nucleus membrane. This is an uncharacterized protein from Schizosaccharomyces pombe (strain 972 / ATCC 24843) (Fission yeast).